The following is a 444-amino-acid chain: Sonic hedgehog protein (444 aa).

Residues 1–24 (MLVATQSLLLLSFICTLVTPPGLA) form the signal peptide. Cys-25 carries N-palmitoyl cysteine lipidation. A Cardin-Weintraub motif is present at residues 33 to 39 (KRRHPKK). Glu-90, Glu-91, Asp-96, Thr-126, Glu-127, Asp-130, and Asp-132 together coordinate Ca(2+). Positions 141, 148, and 183 each coordinate Zn(2+). Gly-198 is lipidated: Cholesterol glycine ester. Tandem repeats lie at residues 386 to 393 (QVDLQSHH), 394 to 401 (QVDLQSHH), and 403 to 409 (VDLQSHH). The segment at 386-409 (QVDLQSHHQVDLQSHHQVDLQSHH) is 3 X 8 AA tandem repeats of Q-V-D-L-Q-S-H-H.

This sequence belongs to the hedgehog family. In terms of assembly, interacts with HHATL/GUP1 which negatively regulates HHAT-mediated palmitoylation of the SHH N-terminus. Interacts with BOC and CDON. Interacts with HHIP. Interacts with DISP1 via its cholesterol anchor. Interacts with SCUBE2. Multimer. In terms of processing, the C-terminal domain displays an autoproteolysis activity and a cholesterol transferase activity. Both activities result in the cleavage of the full-length protein and covalent attachment of a cholesterol moiety to the C-terminal of the newly generated N-terminal fragment (ShhN). Cholesterylation is required for the sonic hedgehog protein N-product targeting to lipid rafts and multimerization. ShhN is the active species in both local and long-range signaling, whereas the C-product (ShhC) is degraded in the reticulum endoplasmic. N-palmitoylation by HHAT of ShhN is required for sonic hedgehog protein N-product multimerization and full activity. It is a prerequisite for the membrane-proximal positioning and the subsequent shedding of this N-terminal peptide. Post-translationally, the lipidated N- and C-terminal peptides of ShhNp can be cleaved (shedding). The N-terminal palmitoylated peptide is cleaved at the Cardin-Weintraub (CW) motif site. The cleavage reduced the interactions with heparan sulfate. The cleavage is enhanced by SCUBE2. In terms of tissue distribution, strongly expressed in notochord and neural floor plate during embryogenesis. In tadpole, high expression is observed in pancreas/stomach, moderate expression in tail, and low expression in intestine, brain, and hind limb.

The protein localises to the endoplasmic reticulum membrane. It localises to the golgi apparatus membrane. The protein resides in the cell membrane. The enzyme catalyses glycyl-L-cysteinyl-[protein] + cholesterol + H(+) = [protein]-C-terminal glycyl cholesterol ester + N-terminal L-cysteinyl-[protein]. Its function is as follows. The C-terminal part of the sonic hedgehog protein precursor displays an autoproteolysis and a cholesterol transferase activity. Both activities result in the cleavage of the full-length protein into two parts (ShhN and ShhC) followed by the covalent attachment of a cholesterol moiety to the C-terminal of the newly generated ShhN. Both activities occur in the endoplasmic reticulum. Once cleaved, ShhC is degraded in the endoplasmic reticulum. Functionally, the dually lipidated sonic hedgehog protein N-product (ShhNp) is a morphogen which is essential for a variety of patterning events during development. Induces ventral cell fate in the neural tube and somites. Involved in the patterning of the anterior-posterior axis of the developing limb bud. Essential for axon guidance. Binds to the patched (PTCH1) receptor, which functions in association with smoothened (SMO), to activate the transcription of target genes. In the absence of SHH, PTCH1 represses the constitutive signaling activity of SMO. The sequence is that of Sonic hedgehog protein from Xenopus laevis (African clawed frog).